The chain runs to 192 residues: Vascular endothelial growth factor A (192 aa).

The first 26 residues, 1–26 (MNFLLTWIHWGLAALLYFHNAKVLQA), serve as a signal peptide directing secretion. Disulfide bonds link cysteine 52–cysteine 94, cysteine 83–cysteine 128, and cysteine 87–cysteine 130. A glycan (N-linked (GlcNAc...) asparagine) is linked at asparagine 101.

This sequence belongs to the PDGF/VEGF growth factor family. In terms of assembly, homodimer; disulfide-linked. Also found as heterodimer with PGF. Interacts with FLT1/VEGFR1 and KDR/VEGFR2 receptors, heparan sulfate and heparin. In terms of tissue distribution, expressed by the venom gland, and probably other tissues.

It is found in the secreted. Growth factor active in angiogenesis, vasculogenesis and endothelial cell growth. Induces endothelial cell proliferation, promotes cell migration, inhibits apoptosis and induces permeabilization of blood vessels. This is Vascular endothelial growth factor A from Agkistrodon piscivorus piscivorus (Eastern cottonmouth).